Here is a 58-residue protein sequence, read N- to C-terminus: Small ribosomal subunit protein bS21 (58 aa).

Residues Asp39–Arg58 form a disordered region. Over residues Val43–Arg58 the composition is skewed to basic residues.

It belongs to the bacterial ribosomal protein bS21 family.

The sequence is that of Small ribosomal subunit protein bS21 (rpsU) from Chlamydia pneumoniae (Chlamydophila pneumoniae).